We begin with the raw amino-acid sequence, 103 residues long: UPF0145 protein CYB_1351 (103 aa).

It belongs to the UPF0145 family.

The chain is UPF0145 protein CYB_1351 from Synechococcus sp. (strain JA-2-3B'a(2-13)) (Cyanobacteria bacterium Yellowstone B-Prime).